Reading from the N-terminus, the 158-residue chain is uncharacterized protein (158 aa).

The segment covering 1 to 21 (MPHTGSQHTLQATPKTAQHTG) has biased composition (polar residues). Disordered stretches follow at residues 1 to 89 (MPHT…RVEG) and 107 to 158 (EEEK…DAKT). 2 stretches are compositionally biased toward basic and acidic residues: residues 51–68 (HTEG…DKAG) and 107–127 (EEEK…RESR). Positions 128–137 (QGTAHKSTCM) are enriched in polar residues. Over residues 149 to 158 (EIGKVEDAKT) the composition is skewed to basic and acidic residues.

This is an uncharacterized protein from Encephalitozoon cuniculi (strain GB-M1) (Microsporidian parasite).